The chain runs to 2340 residues: Protein pad-1 (2340 aa).

2 disordered regions span residues 411 to 458 (KLIK…EPSI) and 1910 to 1959 (TRNS…RRDP). Residues 415–432 (KRPDSKPPRKPGDREGLH) show a composition bias toward basic and acidic residues. A compositionally biased stretch (polar residues) spans 437-448 (SLHSGVSGNSED). Residues 1922–1934 (GGSITSGSTSTTT) are compositionally biased toward low complexity.

This sequence belongs to the DOP1 family.

Functionally, essential for cell patterning during gastrulation. May be involved in protein traffic between late Golgi and early endosomes. In Caenorhabditis briggsae, this protein is Protein pad-1 (pad-1).